The sequence spans 81 residues: Photosystem I iron-sulfur center (81 aa).

2 4Fe-4S ferredoxin-type domains span residues 2-31 (SHSV…MVPW) and 39-68 (IASS…IRVY). [4Fe-4S] cluster-binding residues include cysteine 11, cysteine 14, cysteine 17, cysteine 21, cysteine 48, cysteine 51, cysteine 54, and cysteine 58.

In terms of assembly, the G.violaceus PSI reaction center is composed of one copy each of PsaA,B,C,D,E,F,L,M and Z, and forms trimeric complexes. [4Fe-4S] cluster serves as cofactor.

The protein resides in the cell inner membrane. It catalyses the reaction reduced [plastocyanin] + hnu + oxidized [2Fe-2S]-[ferredoxin] = oxidized [plastocyanin] + reduced [2Fe-2S]-[ferredoxin]. Its function is as follows. Apoprotein for the two 4Fe-4S centers FA and FB of photosystem I (PSI); essential for photochemical activity. FB is the terminal electron acceptor of PSI, donating electrons to ferredoxin. The C-terminus interacts with PsaA/B/D and helps assemble the protein into the PSI complex. Required for binding of PsaD and PsaE to PSI. PSI is a plastocyanin/cytochrome c6-ferredoxin oxidoreductase, converting photonic excitation into a charge separation, which transfers an electron from the donor P700 chlorophyll pair to the spectroscopically characterized acceptors A0, A1, FX, FA and FB in turn. This chain is Photosystem I iron-sulfur center, found in Gloeobacter violaceus (strain ATCC 29082 / PCC 7421).